A 326-amino-acid polypeptide reads, in one-letter code: GTP 3',8-cyclase (326 aa).

The Radical SAM core domain occupies 6 to 220; that stretch reads SFGRRINYLR…DRISASYELE (215 aa). Position 15 (Arg15) interacts with GTP. [4Fe-4S] cluster-binding residues include Cys22 and Cys26. An S-adenosyl-L-methionine-binding site is contributed by Tyr28. Cys29 lines the [4Fe-4S] cluster pocket. Arg65 lines the GTP pocket. An S-adenosyl-L-methionine-binding site is contributed by Gly69. Residue Thr96 participates in GTP binding. Ser120 provides a ligand contact to S-adenosyl-L-methionine. Residue Lys157 participates in GTP binding. Met191 contacts S-adenosyl-L-methionine. Cys254 and Cys257 together coordinate [4Fe-4S] cluster. 259 to 261 is a binding site for GTP; that stretch reads RVR. Residue Cys271 participates in [4Fe-4S] cluster binding.

This sequence belongs to the radical SAM superfamily. MoaA family. Monomer and homodimer. Requires [4Fe-4S] cluster as cofactor.

The enzyme catalyses GTP + AH2 + S-adenosyl-L-methionine = (8S)-3',8-cyclo-7,8-dihydroguanosine 5'-triphosphate + 5'-deoxyadenosine + L-methionine + A + H(+). It participates in cofactor biosynthesis; molybdopterin biosynthesis. In terms of biological role, catalyzes the cyclization of GTP to (8S)-3',8-cyclo-7,8-dihydroguanosine 5'-triphosphate. The chain is GTP 3',8-cyclase from Geobacter sulfurreducens (strain ATCC 51573 / DSM 12127 / PCA).